A 102-amino-acid polypeptide reads, in one-letter code: RNA-binding protein Hfq (102 aa).

Residues 9 to 68 (DPFLNALRRERVPVSIYLVNGIKLQGQIESFDQFVILLKNTVSQMVYKHAISTVVPSRPV) form the Sm domain. The interval 63 to 102 (VPSRPVSHHSNNAGGGTSSNYHHGSSAQGTSAQQDSEETE) is disordered. Residues 70–96 (HHSNNAGGGTSSNYHHGSSAQGTSAQQ) are compositionally biased toward polar residues.

The protein belongs to the Hfq family. Homohexamer.

RNA chaperone that binds small regulatory RNA (sRNAs) and mRNAs to facilitate mRNA translational regulation in response to envelope stress, environmental stress and changes in metabolite concentrations. Also binds with high specificity to tRNAs. The protein is RNA-binding protein Hfq of Citrobacter koseri (strain ATCC BAA-895 / CDC 4225-83 / SGSC4696).